A 117-amino-acid polypeptide reads, in one-letter code: Aspartate 1-decarboxylase (117 aa).

Ser-25 functions as the Schiff-base intermediate with substrate; via pyruvic acid in the catalytic mechanism. The residue at position 25 (Ser-25) is a Pyruvic acid (Ser). Residue Thr-57 coordinates substrate. The active-site Proton donor is Tyr-58. 72 to 74 (GAA) is a substrate binding site.

Belongs to the PanD family. Heterooctamer of four alpha and four beta subunits. Pyruvate is required as a cofactor. Post-translationally, is synthesized initially as an inactive proenzyme, which is activated by self-cleavage at a specific serine bond to produce a beta-subunit with a hydroxyl group at its C-terminus and an alpha-subunit with a pyruvoyl group at its N-terminus.

It localises to the cytoplasm. It carries out the reaction L-aspartate + H(+) = beta-alanine + CO2. It participates in cofactor biosynthesis; (R)-pantothenate biosynthesis; beta-alanine from L-aspartate: step 1/1. In terms of biological role, catalyzes the pyruvoyl-dependent decarboxylation of aspartate to produce beta-alanine. The protein is Aspartate 1-decarboxylase of Helicobacter pylori (strain ATCC 700392 / 26695) (Campylobacter pylori).